Consider the following 324-residue polypeptide: Malate dehydrogenase (324 aa).

NAD(+) contacts are provided by residues 20 to 25 (GAGNVG) and Asp-44. Substrate is bound by residues Arg-93 and Arg-99. NAD(+)-binding positions include Asn-106 and 129-131 (VTN). Residues Asn-131 and Arg-162 each contribute to the substrate site. Residue His-186 is the Proton acceptor of the active site.

It belongs to the LDH/MDH superfamily. MDH type 3 family.

The catalysed reaction is (S)-malate + NAD(+) = oxaloacetate + NADH + H(+). Functionally, catalyzes the reversible oxidation of malate to oxaloacetate. In Synechocystis sp. (strain ATCC 27184 / PCC 6803 / Kazusa), this protein is Malate dehydrogenase.